Reading from the N-terminus, the 395-residue chain is Phosphoglycerate kinase (395 aa).

Residues 21 to 23 (DLN), R36, 59 to 62 (HLGR), R113, and R146 each bind substrate. ATP-binding positions include K197, E324, and 350–353 (GGDT).

Belongs to the phosphoglycerate kinase family. Monomer.

It is found in the cytoplasm. It catalyses the reaction (2R)-3-phosphoglycerate + ATP = (2R)-3-phospho-glyceroyl phosphate + ADP. It functions in the pathway carbohydrate degradation; glycolysis; pyruvate from D-glyceraldehyde 3-phosphate: step 2/5. The protein is Phosphoglycerate kinase of Acinetobacter baumannii (strain AB307-0294).